We begin with the raw amino-acid sequence, 169 residues long: Large ribosomal subunit protein uL10 (169 aa).

The protein belongs to the universal ribosomal protein uL10 family. Part of the ribosomal stalk of the 50S ribosomal subunit. The N-terminus interacts with L11 and the large rRNA to form the base of the stalk. The C-terminus forms an elongated spine to which L12 dimers bind in a sequential fashion forming a multimeric L10(L12)X complex.

Its function is as follows. Forms part of the ribosomal stalk, playing a central role in the interaction of the ribosome with GTP-bound translation factors. This chain is Large ribosomal subunit protein uL10, found in Rickettsia bellii (strain OSU 85-389).